We begin with the raw amino-acid sequence, 501 residues long: Ribose import ATP-binding protein RbsA (501 aa).

ABC transporter domains are found at residues 5–241 (LQLK…VGRK) and 252–495 (APGD…VGKL). An ATP-binding site is contributed by 37–44 (GENGAGKS).

This sequence belongs to the ABC transporter superfamily. Ribose importer (TC 3.A.1.2.1) family. In terms of assembly, the complex is composed of an ATP-binding protein (RbsA), two transmembrane proteins (RbsC) and a solute-binding protein (RbsB).

The protein resides in the cell inner membrane. It catalyses the reaction D-ribose(out) + ATP + H2O = D-ribose(in) + ADP + phosphate + H(+). Functionally, part of the ABC transporter complex RbsABC involved in ribose import. Responsible for energy coupling to the transport system. In Escherichia coli O6:H1 (strain CFT073 / ATCC 700928 / UPEC), this protein is Ribose import ATP-binding protein RbsA.